The chain runs to 147 residues: Large ribosomal subunit protein uL13 (147 aa).

It belongs to the universal ribosomal protein uL13 family. As to quaternary structure, part of the 50S ribosomal subunit.

In terms of biological role, this protein is one of the early assembly proteins of the 50S ribosomal subunit, although it is not seen to bind rRNA by itself. It is important during the early stages of 50S assembly. The chain is Large ribosomal subunit protein uL13 from Ligilactobacillus salivarius (strain UCC118) (Lactobacillus salivarius).